Reading from the N-terminus, the 456-residue chain is MAVAISGSSLISSTLQHYNNRIYIRDYPIPCHSSNPICNSFNFKRRSFSPSSPKFNDHVVNPSSSYLSSKLSPIRTHSSFAACGCSWIQDNSMVHDYATTTNGTSKRCSALPTTNTVDVSSVSDLFEFICSGPLVNKIGITPQRVGQSIDKWLLYGSQLCRLFQLNELKLTIPQKARLYHYYIPVFIWCEDQIALHNSKFKDGDDVPPLVIGFSAPQGCGKTTLVFALDYLFKTTKKKSATISVDDFYLTAEGQAELRKKNPGNALLEYRGNAGSHDLKLSVETLEALSKLTKEGLKMKVPRYNKSAYSGRGDRADSSTWPEVEGPLSVILFEGWMLGFKPLPADVVKAVDPQLEVVNKNLEAYYDAWDKYIDAWVVIKIQDPSYVYRWRLQAEIAMRQDGQAGMSDEEVNDFVSRYLPAYKAYLPTLYAEGPSGSDPDRVLAIDIDEERNPILAN.

Residues 1-63 (MAVAISGSSL…KFNDHVVNPS (63 aa)) constitute a chloroplast transit peptide. 215 to 222 (APQGCGKT) is an ATP binding site.

It belongs to the GLYK kinase family.

The protein resides in the plastid. The protein localises to the chloroplast. It localises to the cytoplasm. It catalyses the reaction (R)-glycerate + ATP = (2R)-3-phosphoglycerate + ADP + H(+). The protein operates within photosynthesis; photorespiration; 3-phospho-D-glycerate from glycine: step 4/4. Catalyzes the concluding reaction of the photorespiratory C2 cycle, an indispensable ancillary metabolic pathway to the photosynthetic C3 cycle that enables land plants to grow in an oxygen-containing atmosphere. Functionally, cytoplasmic D-glycerate 3-kinase that constitutes a photorespiratory bypass that alleviates fluctuating light-induced photoinhibition. The protein is D-glycerate 3-kinase, chloroplastic of Arabidopsis thaliana (Mouse-ear cress).